Here is a 403-residue protein sequence, read N- to C-terminus: CCA-adding enzyme (403 aa).

Residues Gly-32 and Arg-35 each coordinate ATP. CTP contacts are provided by Gly-32 and Arg-35. Mg(2+)-binding residues include Asp-45 and Asp-47. 5 residues coordinate ATP: Arg-116, Asp-159, Arg-162, Arg-165, and Arg-168. CTP-binding residues include Arg-116, Asp-159, Arg-162, Arg-165, and Arg-168.

It belongs to the tRNA nucleotidyltransferase/poly(A) polymerase family. Bacterial CCA-adding enzyme type 3 subfamily. In terms of assembly, homodimer. The cofactor is Mg(2+).

The enzyme catalyses a tRNA precursor + 2 CTP + ATP = a tRNA with a 3' CCA end + 3 diphosphate. It catalyses the reaction a tRNA with a 3' CCA end + 2 CTP + ATP = a tRNA with a 3' CCACCA end + 3 diphosphate. In terms of biological role, catalyzes the addition and repair of the essential 3'-terminal CCA sequence in tRNAs without using a nucleic acid template. Adds these three nucleotides in the order of C, C, and A to the tRNA nucleotide-73, using CTP and ATP as substrates and producing inorganic pyrophosphate. tRNA 3'-terminal CCA addition is required both for tRNA processing and repair. Also involved in tRNA surveillance by mediating tandem CCA addition to generate a CCACCA at the 3' terminus of unstable tRNAs. While stable tRNAs receive only 3'-terminal CCA, unstable tRNAs are marked with CCACCA and rapidly degraded. The protein is CCA-adding enzyme of Leuconostoc citreum (strain KM20).